Here is a 507-residue protein sequence, read N- to C-terminus: MNNFFNPSRPSPRPWPNRKKQTDKSAIFLCSVSILVVFFIVVFFITYSEMPKSLFSISAFSGSVQFPQCRSEILTRTLLGQKFLWYAPHSGFSNQLSEFKNALLMAGILNRTLIIPPILDHHAVALGSCPKFRVLSPSEIRISVWNHSIELLKTDRYVSMADIVDISSLVSSSAVRVIDFRYFASLQCGVDLETLCTDDLAEQSQAYESLKQCGYLLSGVRGNVDKCLYAVDEDCRTTVWTYKNGEADGRLDSFQPDEKLKKKKKLSNVRRRRDVYKTLGHGTEAESAAILAFGSLFTAPYKGSELYIDIHKSPKIKSLVEKVDFLPFVREIMIAGKKFASETIKAPFLCAQLRLLDGQFKNHRESTFTGLYQKLEALSVKNPGLINVFVMTDLPEFNWTGTYLGDLSKNSTNFKLHFIGEQDEFLARTEHELDSASHGQKFGSIPMSLDSIKKMQTHCYPHGGSNVQLYIEEAVCSCASLGFVGTPGSTIADSVEMMRKYNACSSS.

The chain crosses the membrane as a helical; Signal-anchor for type II membrane protein span at residues 26 to 46; it reads AIFLCSVSILVVFFIVVFFIT. N-linked (GlcNAc...) asparagine glycosylation is found at N110, N146, N398, and N410.

Belongs to the glycosyltransferase GT106 family.

Its subcellular location is the membrane. It participates in glycan metabolism. This is O-fucosyltransferase 30 from Arabidopsis thaliana (Mouse-ear cress).